Here is an 87-residue protein sequence, read N- to C-terminus: UPF0335 protein RL4065 (87 aa).

This sequence belongs to the UPF0335 family.

The protein is UPF0335 protein RL4065 of Rhizobium johnstonii (strain DSM 114642 / LMG 32736 / 3841) (Rhizobium leguminosarum bv. viciae).